Here is a 253-residue protein sequence, read N- to C-terminus: MWIGVISLFPEMFNAITEYGVTGRAIRNGLIDFHLWNPRDFTHDKHRTVDDRPYGGGPGMLMMVQPLRDAIAAARKAAEVNGGKAKVIYLSPQGRKLDQQGVSELAQHDRLVFIAGRYEGIDERLIASDIDEEWSVGDYILSGGELPAMNVIDAVARLVPGVLGHKESAEQDSFSNGLLDCPHYTRPEVLTTPQGDEMSVPKVLLSGNHEHIRLWRQEQSLLRTWTRRPELLNNLALTAEQEKALTLIKKQVK.

Residues glycine 116 and 136–141 contribute to the S-adenosyl-L-methionine site; that span reads VGDYIL.

This sequence belongs to the RNA methyltransferase TrmD family. As to quaternary structure, homodimer.

Its subcellular location is the cytoplasm. It carries out the reaction guanosine(37) in tRNA + S-adenosyl-L-methionine = N(1)-methylguanosine(37) in tRNA + S-adenosyl-L-homocysteine + H(+). Functionally, specifically methylates guanosine-37 in various tRNAs. This is tRNA (guanine-N(1)-)-methyltransferase from Colwellia psychrerythraea (strain 34H / ATCC BAA-681) (Vibrio psychroerythus).